A 131-amino-acid chain; its full sequence is Large-conductance mechanosensitive channel (131 aa).

The next 3 membrane-spanning stretches (helical) occupy residues 8–28 (FAVRGNVIDLAVGVIIGGAFG), 30–50 (IVSSLVNDIIMPLVGLILGGI), and 67–87 (GAFLQTVVDFLVIAFSIFLFV).

It belongs to the MscL family. In terms of assembly, homopentamer.

Its subcellular location is the cell membrane. Functionally, channel that opens in response to stretch forces in the membrane lipid bilayer. May participate in the regulation of osmotic pressure changes within the cell. In Anoxybacillus flavithermus (strain DSM 21510 / WK1), this protein is Large-conductance mechanosensitive channel.